Here is a 182-residue protein sequence, read N- to C-terminus: MENSRVLSCQYRSSFGSSNARRIRAKSEIPAVVYGQGKDVSHLRIKSSEFNKKFAKFTDNTVLILDDGKLERCVFVKDAAENIASKLIYHIDFYEVDRNVELEKYVPIKLIGASIGVKEGGILTVLKEQVKVRSLPLDLPEFIELDLTPVNKGDSVLLKDLVLPSNVRLAENDENLEVVIIK.

This sequence belongs to the bacterial ribosomal protein bL25 family. CTC subfamily. In terms of assembly, part of the 50S ribosomal subunit; part of the 5S rRNA/L5/L18/L25 subcomplex. Contacts the 5S rRNA. Binds to the 5S rRNA independently of L5 and L18.

In terms of biological role, this is one of the proteins that binds to the 5S RNA in the ribosome where it forms part of the central protuberance. The polypeptide is Large ribosomal subunit protein bL25 (Borreliella burgdorferi (strain ATCC 35210 / DSM 4680 / CIP 102532 / B31) (Borrelia burgdorferi)).